The chain runs to 400 residues: Exodeoxyribonuclease 7 large subunit (400 aa).

It belongs to the XseA family. In terms of assembly, heterooligomer composed of large and small subunits.

The protein resides in the cytoplasm. The enzyme catalyses Exonucleolytic cleavage in either 5'- to 3'- or 3'- to 5'-direction to yield nucleoside 5'-phosphates.. Bidirectionally degrades single-stranded DNA into large acid-insoluble oligonucleotides, which are then degraded further into small acid-soluble oligonucleotides. The sequence is that of Exodeoxyribonuclease 7 large subunit from Clostridium perfringens (strain SM101 / Type A).